The primary structure comprises 84 residues: uncharacterized protein (84 aa).

Residues 25–45 (ILMTVAGFIIAFAILVFQISF) form a helical membrane-spanning segment.

The protein localises to the membrane. This is an uncharacterized protein from Bacillus anthracis.